The sequence spans 205 residues: uncharacterized protein (205 aa).

This sequence to M.jannaschii MJ0638 and MJ1252 and M.tuberculosis Rv2003c.

This is an uncharacterized protein from Methanocaldococcus jannaschii (strain ATCC 43067 / DSM 2661 / JAL-1 / JCM 10045 / NBRC 100440) (Methanococcus jannaschii).